Reading from the N-terminus, the 191-residue chain is Ribonuclease M5 1 (191 aa).

Residues 10–93 (KEVIVVEGKD…AFLTKHDAAP (84 aa)) enclose the Toprim domain. Mg(2+) contacts are provided by glutamate 16, aspartate 62, and aspartate 64.

It belongs to the ribonuclease M5 family. Mg(2+) is required as a cofactor.

Its subcellular location is the cytoplasm. The catalysed reaction is Endonucleolytic cleavage of RNA, removing 21 and 42 nucleotides, respectively, from the 5'- and 3'-termini of a 5S-rRNA precursor.. In terms of biological role, required for correct processing of both the 5' and 3' ends of 5S rRNA precursor. Cleaves both sides of a double-stranded region yielding mature 5S rRNA in one step. The sequence is that of Ribonuclease M5 1 from Ligilactobacillus salivarius (strain CECT 5713) (Lactobacillus salivarius).